The sequence spans 258 residues: Clathrin light chain 3 (258 aa).

The segment covering 1-18 (MSSTLSNEESGLGDSNRS) has biased composition (polar residues). The segment at 1 to 96 (MSSTLSNEES…PPPSAMEKEE (96 aa)) is disordered. S2 is subject to N-acetylserine. Positions 34-50 (SRFQSQRFDSSFSNFDS) are enriched in low complexity. Polar residues predominate over residues 66–79 (RPETQSPPSINSFD). An involved in binding clathrin heavy chain region spans residues 90–152 (SAMEKEEGFA…TIENNKKLNR (63 aa)). Residues 105 to 164 (RLNALRLEEKEKEEKEMVQQILEAAEQYKAEFYSKRNVTIENNKKLNREKEKFFLENQEK) are a coiled coil. Residues 224–234 (LKHNPPTHMKP) show a composition bias toward basic residues. Residues 224-258 (LKHNPPTHMKPKLPSPSGADPNVSVSEQVTVTEKL) form a disordered region. Residues 246–258 (VSVSEQVTVTEKL) show a composition bias toward polar residues.

This sequence belongs to the clathrin light chain family. In terms of assembly, clathrin coats are formed from molecules containing 3 heavy chains and 3 light chains.

It is found in the cytoplasmic vesicle membrane. It localises to the membrane. The protein resides in the coated pit. Clathrin is the major protein of the polyhedral coat of coated pits and vesicles. The chain is Clathrin light chain 3 from Arabidopsis thaliana (Mouse-ear cress).